The sequence spans 585 residues: A-type ATP synthase subunit A (585 aa).

The tract at residues 192–211 is disordered; it reads MRQEWPVREPRPTVEKKTPR. Positions 196–211 are enriched in basic and acidic residues; sequence WPVREPRPTVEKKTPR. 237 to 244 contributes to the ATP binding site; sequence GPFGSGKT.

The protein belongs to the ATPase alpha/beta chains family. Has multiple subunits with at least A(3), B(3), C, D, E, F, H, I and proteolipid K(x).

It is found in the cell membrane. It carries out the reaction ATP + H2O + 4 H(+)(in) = ADP + phosphate + 5 H(+)(out). Functionally, component of the A-type ATP synthase that produces ATP from ADP in the presence of a proton gradient across the membrane. The A chain is the catalytic subunit. The sequence is that of A-type ATP synthase subunit A from Haloquadratum walsbyi (strain DSM 16790 / HBSQ001).